Reading from the N-terminus, the 500-residue chain is Aldehyde dehydrogenase, mitochondrial (500 aa).

Residues Lys35, Lys56, and Lys142 each carry the N6-acetyllysine modification. Position 245–250 (245–250 (GSTEVG)) interacts with NAD(+). Glu268 serves as the catalytic Proton acceptor. The active-site Nucleophile is the Cys302. N6-acetyllysine occurs at positions 358, 366, 409, 411, 424, and 434.

This sequence belongs to the aldehyde dehydrogenase family. As to quaternary structure, homotetramer. In response to mitochondrial stress, the precursor protein is ubiquitinated by the SIFI complex in the cytoplasm before mitochondrial import, leading to its degradation. Within the SIFI complex, UBR4 initiates ubiquitin chain that are further elongated or branched by KCMF1.

It is found in the mitochondrion matrix. The enzyme catalyses an aldehyde + NAD(+) + H2O = a carboxylate + NADH + 2 H(+). It participates in alcohol metabolism; ethanol degradation; acetate from ethanol: step 2/2. Required for clearance of cellular formaldehyde, a cytotoxic and carcinogenic metabolite that induces DNA damage. The polypeptide is Aldehyde dehydrogenase, mitochondrial (ALDH2) (Equus caballus (Horse)).